A 21-amino-acid polypeptide reads, in one-letter code: Buforin-2 (21 aa).

An N6-(2-hydroxyisobutyryl)lysine; alternate modification is found at Lys21.

This sequence belongs to the histone H2A family. Expressed by the skin glands.

It localises to the secreted. Functionally, antimicrobial peptide with potent activity against some Gram-positive and Gram-negative bacteria. Does not permeabilize membrane, but internalizes into bacterial cells and alter specific gene expression involved in bacterial resistance mechanisms. Has the ability to agglutinate E.coli, and lipid vesicles. Shows a weak hemolytic activity, and is not cytotoxic to monocytes. The polypeptide is Buforin-2 (Sphaenorhynchus lacteus (Orinoco lime treefrog)).